The primary structure comprises 329 residues: GTP 3',8-cyclase (329 aa).

Positions 8–234 (AFARKFYYLR…QLRQRSDGPA (227 aa)) constitute a Radical SAM core domain. Arg-17 is a GTP binding site. 2 residues coordinate [4Fe-4S] cluster: Cys-24 and Cys-28. Residue Tyr-30 participates in S-adenosyl-L-methionine binding. Position 31 (Cys-31) interacts with [4Fe-4S] cluster. GTP is bound at residue Arg-68. Gly-72 contributes to the S-adenosyl-L-methionine binding site. Thr-99 contacts GTP. S-adenosyl-L-methionine is bound at residue Ser-123. Lys-160 contributes to the GTP binding site. Met-194 contacts S-adenosyl-L-methionine. The [4Fe-4S] cluster site is built by Cys-257 and Cys-260. 262–264 (RLR) contacts GTP. Cys-274 is a [4Fe-4S] cluster binding site.

The protein belongs to the radical SAM superfamily. MoaA family. As to quaternary structure, monomer and homodimer. Requires [4Fe-4S] cluster as cofactor.

The enzyme catalyses GTP + AH2 + S-adenosyl-L-methionine = (8S)-3',8-cyclo-7,8-dihydroguanosine 5'-triphosphate + 5'-deoxyadenosine + L-methionine + A + H(+). Its pathway is cofactor biosynthesis; molybdopterin biosynthesis. Functionally, catalyzes the cyclization of GTP to (8S)-3',8-cyclo-7,8-dihydroguanosine 5'-triphosphate. The sequence is that of GTP 3',8-cyclase from Escherichia coli (strain K12 / MC4100 / BW2952).